The primary structure comprises 364 residues: Palmitoyltransferase ZDHHC9 (364 aa).

At 1–35 (MSVMVVRKKVTRKWEKLPGRNTFCCDGRVMMARQK) the chain is on the cytoplasmic side. A helical membrane pass occupies residues 36-56 (GIFYLTLFLILGTCTLFFAFE). Over 57 to 63 (CRYLAVQ) the chain is Lumenal. Residues 64-84 (LSPAIPVFAAMLFLFSMATLL) traverse the membrane as a helical segment. The Cytoplasmic segment spans residues 85 to 183 (RTSFSDPGVI…NCVGKRNYRY (99 aa)). The region spanning 139 to 189 (KYCYTCKIFRPPRASHCSICDNCVERFDHHCPWVGNCVGKRNYRYFYLFIL) is the DHHC domain. The S-palmitoyl cysteine intermediate role is filled by cysteine 169. Residues 184–204 (FYLFILSLSLLTIYVFAFNIV) form a helical membrane-spanning segment. Residues 205 to 228 (YVALKSLKIGFLETLKETPGTVLE) are Lumenal-facing. The helical transmembrane segment at 229 to 249 (VLICFFTLWSVVGLTGFHTFL) threads the bilayer. Residues 250-364 (VALNQTTNED…PPQEAAEAEK (115 aa)) are Cytoplasmic-facing. The interval 303–364 (PLEESGSRPP…PPQEAAEAEK (62 aa)) is disordered. Residues 310-323 (RPPSTQETSSSLLP) show a composition bias toward polar residues. A compositionally biased stretch (pro residues) spans 346-356 (EMPPPEPPEPP).

The protein belongs to the DHHC palmitoyltransferase family. ERF2/ZDHHC9 subfamily. In terms of assembly, interacts with GOLGA7. In terms of tissue distribution, highly expressed in kidney, skeletal muscle, brain, lung and liver. Absent in thymus, spleen and leukocytes.

It localises to the endoplasmic reticulum membrane. The protein localises to the golgi apparatus membrane. It catalyses the reaction L-cysteinyl-[protein] + hexadecanoyl-CoA = S-hexadecanoyl-L-cysteinyl-[protein] + CoA. Palmitoyltransferase that catalyzes the addition of palmitate onto various protein substrates, such as ADRB2, GSDMD, HRAS, NRAS and CGAS. The ZDHHC9-GOLGA7 complex is a palmitoyltransferase specific for HRAS and NRAS. May have a palmitoyltransferase activity toward the beta-2 adrenergic receptor/ADRB2 and therefore regulate G protein-coupled receptor signaling. Acts as a regulator of innate immunity by catalyzing palmitoylation of CGAS, thereby promoting CGAS homodimerization and cyclic GMP-AMP synthase activity. Activates pyroptosis by catalyzing palmitoylation of gasdermin-D (GSDMD), thereby promoting membrane translocation and pore formation of GSDMD. Its function is as follows. (Microbial infection) Through a sequential action with ZDHHC20, rapidly and efficiently palmitoylates SARS coronavirus-2/SARS-CoV-2 spike protein following its synthesis in the endoplasmic reticulum (ER). In the infected cell, promotes spike biogenesis by protecting it from premature ER degradation, increases half-life and controls the lipid organization of its immediate membrane environment. Once the virus has formed, spike palmitoylation controls fusion with the target cell. In Homo sapiens (Human), this protein is Palmitoyltransferase ZDHHC9.